Here is a 130-residue protein sequence, read N- to C-terminus: Small ribosomal subunit protein uS11 (130 aa).

This sequence belongs to the universal ribosomal protein uS11 family. Part of the 30S ribosomal subunit. Interacts with proteins S7 and S18. Binds to IF-3.

Located on the platform of the 30S subunit, it bridges several disparate RNA helices of the 16S rRNA. Forms part of the Shine-Dalgarno cleft in the 70S ribosome. This Thermoanaerobacter sp. (strain X514) protein is Small ribosomal subunit protein uS11.